Reading from the N-terminus, the 1006-residue chain is Collagen alpha-2(I) chain (1006 aa).

The segment at 1–84 is disordered; sequence SGGFDFSFLP…GFPGTPGLPG (84 aa). Residues Pro10, Pro13, Pro35, and Pro41 each carry the 4-hydroxyproline modification. Residues 28–64 are compositionally biased toward low complexity; it reads LMGPRGPPGASGAPGPQGFQGPAGEPGEPGQTGPAGA. Lys86 carries the post-translational modification 5-hydroxylysine; alternate. An O-linked (Gal...) hydroxylysine; alternate glycan is attached at Lys86. Positions 99 to 1006 are disordered; it reads GQPGAAGVKG…FGYEGDFYRA (908 aa). 2 stretches are compositionally biased toward low complexity: residues 142-163 and 209-230; these read SRGS…SAGP and PGAN…AGAP. The span at 264 to 273 shows a compositional bias: gly residues; it reads GESGGKGEPG. The span at 274-284 shows a compositional bias: low complexity; it reads SAGPQGPPGSS. Over residues 306–315 the composition is skewed to gly residues; it reads GLRGGPGSRG. Low complexity predominate over residues 328–344; sequence PAGARGASGPAGVRGPS. 4-hydroxyproline occurs at positions 350 and 353. A compositionally biased stretch (low complexity) spans 379-398; the sequence is LPGIDGRPGPIGPAGARGEA. Residues 447-456 show a composition bias toward gly residues; sequence GVQGGKGEQG. Low complexity-rich tracts occupy residues 503-520 and 532-542; these read PGES…SRGP and EPGVVGAPGTA. Positions 543–552 are enriched in gly residues; it reads GPAGSGGLPG. Low complexity-rich tracts occupy residues 585 to 615 and 622 to 642; these read AVGA…PRGS and VGPA…QPGA. The span at 643-652 shows a compositional bias: basic and acidic residues; the sequence is KGERGTKGPK. Positions 660 to 670 are enriched in low complexity; sequence PTGPVGSAGPA. Over residues 680-689 the composition is skewed to gly residues; it reads GSRGDGGPPG. Low complexity predominate over residues 691–700; the sequence is TGFPGAAGRT. Gly residues predominate over residues 737–746; that stretch reads GETGAGGPPG. Composition is skewed to low complexity over residues 754–781 and 789–799; these read SGEP…LGLP and LPGVAGAVGEP. The span at 800–810 shows a compositional bias: gly residues; sequence GPLGIGPPGAR. The span at 837 to 882 shows a compositional bias: low complexity; it reads YAGNPGPVGAAGAPGPHGAVGPAGKHGNRGEPGPVGSAGPVGALGP. Positions 892–903 are enriched in basic and acidic residues; sequence RGDKGEAGDKGP. Over residues 976 to 988 the composition is skewed to pro residues; the sequence is SGPPGPPGPPGPP.

The protein belongs to the fibrillar collagen family. In terms of assembly, trimers of one alpha 2(I) and two alpha 1(I) chains. Interacts (via C-terminus) with TMEM131 (via PapD-L domain); the interaction is direct and is involved in assembly and TRAPPIII ER-to-Golgi transport complex-dependent secretion of collagen. Post-translationally, prolines at the third position of the tripeptide repeating unit (G-X-Y) are hydroxylated in some or all of the chains. In terms of tissue distribution, expressed in bones.

It localises to the secreted. Its subcellular location is the extracellular space. It is found in the extracellular matrix. Its function is as follows. Type I collagen is a member of group I collagen (fibrillar forming collagen). This Choloepus hoffmanni (Hoffmann's two-fingered sloth) protein is Collagen alpha-2(I) chain.